The primary structure comprises 1347 residues: Protocadherin-11 X-linked (1347 aa).

The signal sequence occupies residues 1–23 (MDLLSGTYIFAVLLACVVFHSGA). Topologically, residues 24 to 812 (QEKNYTIREE…VSSPTSDYVK (789 aa)) are extracellular. 7 Cadherin domains span residues 26-139 (KNYT…APLF), 140-249 (PATV…HPVF), 250-355 (KETE…VPSI), 362-466 (NPIN…APVF), 467-570 (TQSF…SPVF), 571-673 (THNE…KPVF), and 677-795 (PSNY…APVT). 3 N-linked (GlcNAc...) asparagine glycosylation sites follow: N27, N48, and N54. N344 is a glycosylation site (N-linked (GlcNAc...) asparagine). An N-linked (GlcNAc...) asparagine glycan is attached at N553. N-linked (GlcNAc...) asparagine glycosylation is present at N773. The chain crosses the membrane as a helical span at residues 813 to 833 (ILVAAVAGTVTVVVVIFITAV). Over 834 to 1347 (VRCRQAPHLK…DSPIMEEHPL (514 aa)) the chain is Cytoplasmic. Disordered regions lie at residues 1031–1050 (IWIH…GKSQ), 1057–1091 (LPEG…GYPQ), 1097–1116 (RATP…ESTF), and 1325–1347 (TFTP…EHPL).

It is found in the cell membrane. Its function is as follows. Potential calcium-dependent cell-adhesion protein. The chain is Protocadherin-11 X-linked (PCDH11X) from Pongo pygmaeus (Bornean orangutan).